The sequence spans 436 residues: Protein translocase subunit SecY (436 aa).

8 helical membrane-spanning segments follow: residues 17-37 (ILLT…PVPY), 72-92 (FGLL…IQLL), 122-142 (TFFW…EVIF), 146-166 (LQVY…VLWF), 209-229 (FSNI…CIYI), 269-289 (VMPL…FEII), 309-329 (ISYW…IFFF), and 380-400 (IFLI…NLNI).

It belongs to the SecY/SEC61-alpha family. In terms of assembly, component of the plastid Sec protein translocase complex, which is composed of at least SecY and SecE.

It localises to the plastid. It is found in the chloroplast thylakoid membrane. Functionally, the central subunit of the protein translocation channel SecYE. Consists of two halves. These two domains form a lateral gate at the front which open onto the bilayer between TMs 2 and 7, and are clamped together by SecE at the back. The channel is closed by both a pore ring composed of hydrophobic SecY resides and a short helix (helix 2A) on the extracellular side of the membrane which forms a plug. In Vaucheria litorea (Yellow-green alga), this protein is Protein translocase subunit SecY.